A 148-amino-acid polypeptide reads, in one-letter code: Deoxyuridine 5'-triphosphate nucleotidohydrolase (148 aa).

Substrate is bound by residues 67–69 (RSG), Asn-80, 84–86 (LID), and Met-94.

This sequence belongs to the dUTPase family. Mg(2+) is required as a cofactor.

The enzyme catalyses dUTP + H2O = dUMP + diphosphate + H(+). It participates in pyrimidine metabolism; dUMP biosynthesis; dUMP from dCTP (dUTP route): step 2/2. This enzyme is involved in nucleotide metabolism: it produces dUMP, the immediate precursor of thymidine nucleotides and it decreases the intracellular concentration of dUTP so that uracil cannot be incorporated into DNA. The protein is Deoxyuridine 5'-triphosphate nucleotidohydrolase of Paraburkholderia phytofirmans (strain DSM 17436 / LMG 22146 / PsJN) (Burkholderia phytofirmans).